The primary structure comprises 714 residues: Delta-like protein 1 (714 aa).

The first 17 residues, 1-17, serve as a signal peptide directing secretion; that stretch reads MGRRSALALAVVSALLC. The Extracellular portion of the chain corresponds to 18 to 537; sequence QVWSSGVFEL…VAAQGGSFPW (520 aa). The DSL domain occupies 176 to 220; that stretch reads FVCDEHYYGEGCSVFCRPRDDAFGHFTCGERGEKMCDPGWKGQYC. Disulfide bonds link C178–C187, C191–C203, C211–C220, C225–C236, C229–C242, C244–C253, C256–C267, C262–C273, C275–C284, C291–C303, C297–C313, C315–C324, C331–C342, C336–C351, C353–C362, C369–C380, C374–C390, C392–C401, C408–C419, C413–C428, C430–C439, C446–C457, C451–C466, C468–C477, C484–C495, C489–C504, and C506–C515. EGF-like domains lie at 225 to 253, 256 to 284, and 291 to 324; these read CLPG…GRYC, CIRY…GLFC, and CTHH…GANC. The EGF-like 4; calcium-binding domain maps to 331–362; the sequence is CAPSPCRNGGSCTDLEDSYSCTCPPGFYGKVC. 2 EGF-like domains span residues 369–401 and 408–439; these read CADG…GFNC and CSSS…GRYC. The region spanning 446 to 477 is the EGF-like 7; calcium-binding domain; that stretch reads CASSPCANGGTCRDSVNDFSCTCPPGYTGRNC. A glycan (N-linked (GlcNAc...) asparagine) is linked at N476. Residues 484–515 enclose the EGF-like 8 domain; the sequence is CEHAPCHNGATCHQRGQRYMCECAQGYGGANC. The chain crosses the membrane as a helical span at residues 538–560; the sequence is VAVCAGVVLVLLLLLGCAAVVVC. Residues 561-714 are Cytoplasmic-facing; the sequence is VRLKLQKHQP…KDECVIATEV (154 aa). K605 is covalently cross-linked (Glycyl lysine isopeptide (Lys-Gly) (interchain with G-Cter in ubiquitin)). Phosphothreonine is present on T630. Positions 644-656 are enriched in basic and acidic residues; the sequence is ATVRDAHSKRDTK. Residues 644–690 form a disordered region; sequence ATVRDAHSKRDTKCQSQGSVGEEKSTSTLRGGEVPDRKRPESVYSTS. Position 685 is a phosphoserine; by PKB (S685). S688 bears the Phosphoserine mark. The tract at residues 711–714 is interaction with MAGI1; the sequence is ATEV.

As to quaternary structure, homodimer. Interacts with TJP1. Interacts with MAGI1 (via PDZ domain); forms a complex with CTNNB1 and CDH2 and promotes recruitment to the adherens junction and stabilization on the cell surface. Interacts with PSEN1; undergoes a presenilin-dependent gamma-secretase cleavage that releases a Dll1-intracellular form. Interacts with MFAP5. Interacts with MIB1. Interacts with NEURL1B; leads to ubiquitination. Interacts with NEURL1. Interacts with SYNJ2BP; enhances DLL1 protein stability, and promotes Notch signaling in endothelial cells. Interacts with MAGI1, MAGI2, MAGI3 and MPDZ. Interacts (via ubiquitin) with EPN1 (via IUM domain); binding with NOTCH1 attached to neighboring cell, promotes ligand ubiquitination and EPN1 interaction, leading to NECD transendocytosis and Notch signaling. Interacts with NOTCH1. Post-translationally, ubiquitinated by MIB (MIB1 or MIB2), leading to its endocytosis and subsequent degradation. Ubiquitinated; promotes recycling back to the plasma membrane and confers a strong affinity for NOTCH1. Mono- and multi-ubiquitinated. Multi-ubiquitination of Lys-605 by MIB1 promotes both cis and trans-interaction with NOTCH1, as well as activation of Notch signaling. Ubiquitinated by NEURL1B. Phosphorylated in a membrane association-dependent manner. Phosphorylation at Ser-688 requires the presence of Ser-685, whereas phosphorylation at Thr-630 and Ser-685 occur independently of the other sites. Phosphorylation is required for full ligand activity in vitro and affects surface presentation, ectodomain shedding, and endocytosis. In terms of processing, O-fucosylated. Can be elongated to a disaccharide by MFNG.

It is found in the apical cell membrane. Its subcellular location is the cell junction. The protein resides in the adherens junction. It localises to the membrane raft. Transmembrane ligand protein of NOTCH1, NOTCH2 and NOTCH3 receptors that binds the extracellular domain (ECD) of Notch receptor in a cis and trans fashion manner. Following transinteraction, ligand cells produce mechanical force that depends of a clathrin-mediated endocytosis, requiring ligand ubiquitination, EPN1 interaction, and actin polymerisation; these events promote Notch receptor extracellular domain (NECD) transendocytosis and triggers Notch signaling through induction of cleavage, hyperphosphorylation, and nuclear accumulation of the intracellular domain of Notch receptors (NICD). Is required for embryonic development and maintenance of adult stem cells in many different tissues and immune systeme; the DLL1-induced Notch signaling is mediated through an intercellular communication that regulates cell lineage, cell specification, cell patterning and morphogenesis through effects on differentiation and proliferation. Plays a role in brain development at different level, namely by regulating neuronal differentiation of neural precursor cells via cell-cell interaction, most likely through the lateral inhibitory system in an endogenous level dependent-manner. During neocortex development, Dll1-Notch signaling transmission is mediated by dynamic interactions between intermediate neurogenic progenitors and radial glia; the cell-cell interactions are mediated via dynamic and transient elongation processes, likely to reactivate/maintain Notch activity in neighboring progenitors, and coordinate progenitor cell division and differentiation across radial and zonal boundaries. During cerebellar development, regulates Bergmann glial monolayer formation and its morphological maturation through a Notch signaling pathway. At the retina and spinal cord level, regulates neurogenesis by preventing the premature differentiation of neural progenitors and also by maintaining progenitors in spinal cord through Notch signaling pathway. Also controls neurogenesis of the neural tube in a progenitor domain-specific fashion along the dorsoventral axis. Maintains quiescence of neural stem cells and plays a role as a fate determinant that segregates asymmetrically to one daughter cell during neural stem cells mitosis, resulting in neuronal differentiation in Dll1-inheriting cell. Plays a role in immune systeme development, namely the development of all T-cells and marginal zone (MZ) B cells. Blocks the differentiation of progenitor cells into the B-cell lineage while promoting the emergence of a population of cells with the characteristics of a T-cell/NK-cell precursor. Also plays a role during muscle development. During early development, inhibits myoblasts differentiation from the medial dermomyotomal lip and later regulates progenitor cell differentiation. Directly modulates cell adhesion and basal lamina formation in satellite cells through Notch signaling. Maintains myogenic progenitors pool by suppressing differentiation through down-regulation of MYOD1 and is required for satellite cell homing and PAX7 expression. During craniofacial and trunk myogenesis suppresses differentiation of cranial mesoderm-derived and somite-derived muscle via MYOD1 regulation but in cranial mesoderm-derived progenitors, is neither required for satellite cell homing nor for PAX7 expression. Also plays a role during pancreatic cell development. During type B pancreatic cell development, may be involved in the initiation of proximodistal patterning in the early pancreatic epithelium. Stimulates multipotent pancreatic progenitor cells proliferation and pancreatic growth by maintaining HES1 expression and PTF1A protein levels. During fetal stages of development, is required to maintain arterial identity and the responsiveness of arterial endothelial cells for VEGFA through regulation of KDR activation and NRP1 expression. Controls sprouting angiogenesis and subsequent vertical branch formation through regulation on tip cell differentiation. Negatively regulates goblet cell differentiation in intestine and controls secretory fat commitment through lateral inhibition in small intestine. Plays a role during inner ear development; negatively regulates auditory hair cell differentiation. Plays a role during nephron development through Notch signaling pathway. Regulates growth, blood pressure and energy homeostasis. This Rattus norvegicus (Rat) protein is Delta-like protein 1 (Dll1).